The sequence spans 216 residues: Imidazole glycerol phosphate synthase subunit HisH (216 aa).

Residues 5 to 213 enclose the Glutamine amidotransferase type-1 domain; it reads RLAVIDYDAG…VEFVARRLPA (209 aa). Residue Cys83 is the Nucleophile of the active site. Residues His188 and Glu190 contribute to the active site.

As to quaternary structure, heterodimer of HisH and HisF.

The protein resides in the cytoplasm. The enzyme catalyses 5-[(5-phospho-1-deoxy-D-ribulos-1-ylimino)methylamino]-1-(5-phospho-beta-D-ribosyl)imidazole-4-carboxamide + L-glutamine = D-erythro-1-(imidazol-4-yl)glycerol 3-phosphate + 5-amino-1-(5-phospho-beta-D-ribosyl)imidazole-4-carboxamide + L-glutamate + H(+). The catalysed reaction is L-glutamine + H2O = L-glutamate + NH4(+). It participates in amino-acid biosynthesis; L-histidine biosynthesis; L-histidine from 5-phospho-alpha-D-ribose 1-diphosphate: step 5/9. Its function is as follows. IGPS catalyzes the conversion of PRFAR and glutamine to IGP, AICAR and glutamate. The HisH subunit catalyzes the hydrolysis of glutamine to glutamate and ammonia as part of the synthesis of IGP and AICAR. The resulting ammonia molecule is channeled to the active site of HisF. The protein is Imidazole glycerol phosphate synthase subunit HisH of Synechococcus sp. (strain JA-3-3Ab) (Cyanobacteria bacterium Yellowstone A-Prime).